The chain runs to 328 residues: Malate dehydrogenase (328 aa).

11–17 (GAAGQIG) serves as a coordination point for NAD(+). Positions 94 and 100 each coordinate substrate. NAD(+) is bound by residues asparagine 107, glutamine 114, and 131-133 (VGN). Substrate contacts are provided by asparagine 133 and arginine 164. The active-site Proton acceptor is the histidine 189.

It belongs to the LDH/MDH superfamily. MDH type 2 family.

It carries out the reaction (S)-malate + NAD(+) = oxaloacetate + NADH + H(+). Catalyzes the reversible oxidation of malate to oxaloacetate. The chain is Malate dehydrogenase from Xylella fastidiosa (strain M12).